The following is an 85-amino-acid chain: Small ribosomal subunit protein uS17 (85 aa).

The protein belongs to the universal ribosomal protein uS17 family. As to quaternary structure, part of the 30S ribosomal subunit.

Functionally, one of the primary rRNA binding proteins, it binds specifically to the 5'-end of 16S ribosomal RNA. The protein is Small ribosomal subunit protein uS17 of Citrifermentans bemidjiense (strain ATCC BAA-1014 / DSM 16622 / JCM 12645 / Bem) (Geobacter bemidjiensis).